We begin with the raw amino-acid sequence, 477 residues long: Polyketide synthase-related protein Dhc1 (477 aa).

Residues 34–112 enclose the Carrier domain; the sequence is EKMTVREGEL…AMTHCVFDRA (79 aa). Serine 72 bears the O-(pantetheine 4'-phosphoryl)serine mark. The tract at residues 161-322 is ketoreductase (KR) domain; that stretch reads LTGATSFLGS…AGEVFLENLV (162 aa). Residues 410 to 435 are disordered; the sequence is VQQQQQQQQRQSQPPRDDAADGSPTE. Residues 411 to 422 show a composition bias toward low complexity; it reads QQQQQQQQRQSQ. Residues 424 to 435 show a composition bias toward basic and acidic residues; the sequence is PRDDAADGSPTE.

The protein operates within mycotoxin biosynthesis. Polyketide synthase-related protein; part of the gene cluster that mediates the biosynthesis of 10,11-dehydrocurvularin, a prevalent fungal phytotoxin with heat shock response and immune-modulatory activities. The highly reducing polyketide synthase Dhc3 is responsible for biosynthesis up to the tetraketide stage. The non-reducing polyketide synthase Dhc5 then conducts four additional chain extension cycles, producing the unreduced part of the nascent octaketide from C-1 to C-8 in 10,11-dehydrocurvularin. The role of Dhc1 in 10,11-dehydrocurvularin biosynthesis has not been identified yet. In Alternaria cinerariae, this protein is Polyketide synthase-related protein Dhc1.